Consider the following 250-residue polypeptide: Pyrroloquinoline-quinone synthase (250 aa).

The protein belongs to the PqqC family.

It carries out the reaction 6-(2-amino-2-carboxyethyl)-7,8-dioxo-1,2,3,4,7,8-hexahydroquinoline-2,4-dicarboxylate + 3 O2 = pyrroloquinoline quinone + 2 H2O2 + 2 H2O + H(+). The protein operates within cofactor biosynthesis; pyrroloquinoline quinone biosynthesis. Its function is as follows. Ring cyclization and eight-electron oxidation of 3a-(2-amino-2-carboxyethyl)-4,5-dioxo-4,5,6,7,8,9-hexahydroquinoline-7,9-dicarboxylic-acid to PQQ. In Xanthomonas campestris pv. campestris (strain 8004), this protein is Pyrroloquinoline-quinone synthase.